The following is a 588-amino-acid chain: Aspartate--tRNA ligase (588 aa).

Position 172 (Glu-172) interacts with L-aspartate. Positions 196-199 (QLFK) are aspartate. Arg-218 serves as a coordination point for L-aspartate. Residues 218-220 (RDE) and Gln-227 each bind ATP. Residue His-449 participates in L-aspartate binding. Glu-483 provides a ligand contact to ATP. Arg-490 is an L-aspartate binding site. 535–538 (GLDR) serves as a coordination point for ATP.

Belongs to the class-II aminoacyl-tRNA synthetase family. Type 1 subfamily. In terms of assembly, homodimer.

Its subcellular location is the cytoplasm. It carries out the reaction tRNA(Asp) + L-aspartate + ATP = L-aspartyl-tRNA(Asp) + AMP + diphosphate. Its function is as follows. Catalyzes the attachment of L-aspartate to tRNA(Asp) in a two-step reaction: L-aspartate is first activated by ATP to form Asp-AMP and then transferred to the acceptor end of tRNA(Asp). The polypeptide is Aspartate--tRNA ligase (Haemophilus influenzae (strain 86-028NP)).